The chain runs to 763 residues: Thyrotropin receptor (763 aa).

The first 21 residues, 1–21 (MRPTPLLRLALFLVLPSSLGG), serve as a signal peptide directing secretion. Residues 22 to 412 (ERCPSPPCEC…EFNPCEDIMG (391 aa)) are Extracellular-facing. A disulfide bond links cysteine 31 and cysteine 41. Residues 51–74 (PPSTQTLKFIETHLKTIPSRAFSN) form an LRR 1 repeat. Asparagine 77 and asparagine 99 each carry an N-linked (GlcNAc...) asparagine glycan. 5 LRR repeats span residues 125–150 (LPLLKFLGIFNTGLRVFPDLTKIYST), 151–174 (DVFFILEITDNPYMTSIPANAFQG), 176–199 (CNETLTLKLYNNGFTSIQGHAFNG), 201–223 (KLDAVYLNKNKYLTVIGQDAFAG), and 225–248 (YSGPTLLDISYTSVTALPSKGLEH). 2 N-linked (GlcNAc...) asparagine glycosylation sites follow: asparagine 177 and asparagine 198. The N-linked (GlcNAc...) asparagine glycan is linked to asparagine 302. Sulfotyrosine is present on tyrosine 384. The chain crosses the membrane as a helical span at residues 413-440 (YKFLRIVVWFVSLLALLGNVFVLVILLT). Topologically, residues 441–449 (SHYKLTVPR) are cytoplasmic. Residues 450–472 (FLMCNLAFADFCMGLYLLLIASV) form a helical membrane-spanning segment. Residues 473-493 (DLYTQSEYYNHAIDWQTGPGC) lie on the Extracellular side of the membrane. Residues cysteine 493 and cysteine 568 are joined by a disulfide bond. The chain crosses the membrane as a helical span at residues 494–516 (NTAGFFTVFASELSVYTLTVITL). Residues 517–536 (ERWHAITFAMRLDRKIRLWH) are Cytoplasmic-facing. The chain crosses the membrane as a helical span at residues 537–559 (AYVIMLGGWVCCFLLALLPLVGI). The Extracellular portion of the chain corresponds to 560–579 (SSYAKVSICLPMDTETPLAL). Residues 580–601 (AYIILVLLLNIIAFIIVCACYV) traverse the membrane as a helical segment. Topologically, residues 602 to 624 (KIYITVRNPHYNPGDKDTRIAKR) are cytoplasmic. The helical transmembrane segment at 625-648 (MAVLIFTDFMCMAPISFYALSALM) threads the bilayer. Residues 649 to 659 (NKPLITVTNSK) are Extracellular-facing. The chain crosses the membrane as a helical span at residues 660–681 (ILLVLFYPLNSCANPFLYAIFT). Over 682–763 (KAFQRDVFML…TSKEYKRTVL (82 aa)) the chain is Cytoplasmic. The disordered stretch occupies residues 742 to 763 (ENSHLTPKQQDQTSKEYKRTVL). Residues 744–753 (SHLTPKQQDQ) are compositionally biased toward polar residues. A compositionally biased stretch (basic and acidic residues) spans 754-763 (TSKEYKRTVL). The PDZ-binding motif lies at 761-763 (TVL).

It belongs to the G-protein coupled receptor 1 family. FSH/LSH/TSH subfamily. Interacts with heterodimer GPHA2:GPHB5; this interaction stimulates cAMP production. Interacts (via the PDZ-binding motif) with SCRIB; regulates TSHR trafficking and function. Post-translationally, glycosylated. Sulfated. Sulfation on Tyr-384 plays a role in thyrotropin receptor binding and activation.

The protein resides in the cell membrane. It localises to the basolateral cell membrane. In terms of biological role, receptor for the thyroid-stimulating hormone (TSH) or thyrotropin. Also acts as a receptor for the heterodimeric glycoprotein hormone (GPHA2:GPHB5) or thyrostimulin. The activity of this receptor is mediated by G proteins which activate adenylate cyclase. Plays a central role in controlling thyroid cell metabolism. The polypeptide is Thyrotropin receptor (TSHR) (Bos taurus (Bovine)).